We begin with the raw amino-acid sequence, 365 residues long: Cobalt-precorrin-5B C(1)-methyltransferase (365 aa).

Belongs to the CbiD family.

The catalysed reaction is Co-precorrin-5B + S-adenosyl-L-methionine = Co-precorrin-6A + S-adenosyl-L-homocysteine. The protein operates within cofactor biosynthesis; adenosylcobalamin biosynthesis; cob(II)yrinate a,c-diamide from sirohydrochlorin (anaerobic route): step 6/10. Its function is as follows. Catalyzes the methylation of C-1 in cobalt-precorrin-5B to form cobalt-precorrin-6A. This Pseudomonas fluorescens (strain Pf0-1) protein is Cobalt-precorrin-5B C(1)-methyltransferase.